Consider the following 606-residue polypeptide: Membrane protein insertase YidC (606 aa).

The helical transmembrane segment at 8 to 28 (LILATALSFLVILVWFLLFPP) threads the bilayer. The segment covering 59-78 (TEAAPGAAPQTAATPTENAP) has biased composition (low complexity). Residues 59-79 (TEAAPGAAPQTAATPTENAPR) form a disordered region. The next 4 membrane-spanning stretches (helical) occupy residues 378-398 (MGVAIIVLTLLIKALLLPLAW), 448-468 (LPILLQIPIFFSLYKVIFVTI), 506-526 (SILALIFIGILPLLLGISMWL), and 542-562 (IFAWLPWVFMFMLGTFASGLI).

The protein belongs to the OXA1/ALB3/YidC family. Type 1 subfamily. In terms of assembly, interacts with the Sec translocase complex via SecD. Specifically interacts with transmembrane segments of nascent integral membrane proteins during membrane integration.

Its subcellular location is the cell inner membrane. Functionally, required for the insertion and/or proper folding and/or complex formation of integral membrane proteins into the membrane. Involved in integration of membrane proteins that insert both dependently and independently of the Sec translocase complex, as well as at least some lipoproteins. Aids folding of multispanning membrane proteins. The sequence is that of Membrane protein insertase YidC from Dinoroseobacter shibae (strain DSM 16493 / NCIMB 14021 / DFL 12).